Reading from the N-terminus, the 606-residue chain is Proline--tRNA ligase (606 aa).

This sequence belongs to the class-II aminoacyl-tRNA synthetase family. ProS type 1 subfamily. Homodimer.

It is found in the cytoplasm. It catalyses the reaction tRNA(Pro) + L-proline + ATP = L-prolyl-tRNA(Pro) + AMP + diphosphate. In terms of biological role, catalyzes the attachment of proline to tRNA(Pro) in a two-step reaction: proline is first activated by ATP to form Pro-AMP and then transferred to the acceptor end of tRNA(Pro). As ProRS can inadvertently accommodate and process non-cognate amino acids such as alanine and cysteine, to avoid such errors it has two additional distinct editing activities against alanine. One activity is designated as 'pretransfer' editing and involves the tRNA(Pro)-independent hydrolysis of activated Ala-AMP. The other activity is designated 'posttransfer' editing and involves deacylation of mischarged Ala-tRNA(Pro). The misacylated Cys-tRNA(Pro) is not edited by ProRS. The protein is Proline--tRNA ligase of Kocuria rhizophila (strain ATCC 9341 / DSM 348 / NBRC 103217 / DC2201).